The following is a 119-amino-acid chain: UPF0342 protein GTNG_0551 (119 aa).

This sequence belongs to the UPF0342 family.

The protein is UPF0342 protein GTNG_0551 of Geobacillus thermodenitrificans (strain NG80-2).